Consider the following 92-residue polypeptide: Kinetoplastid membrane protein 11 (92 aa).

The protein belongs to the KMP-11 family. Monomer.

It localises to the cytoplasm. Its subcellular location is the cytoskeleton. Functionally, may be involved in the regulation of the cytoskeleton through interaction with the subpellicular microtubules. May be involved in parasite mobility and attachment to the surface of the host cell. Behaves as a strong immunogen during infection. The protein is Kinetoplastid membrane protein 11 (KMP-11/1) of Trypanosoma brucei brucei.